Here is a 338-residue protein sequence, read N- to C-terminus: DNA-directed RNA polymerase subunit alpha (338 aa).

The interval 1–234 (MIHKNWQELI…DQLSIFVNFD (234 aa)) is alpha N-terminal domain (alpha-NTD). The interval 250–338 (FNPLLLKKVD…ELAKKYEDNF (89 aa)) is alpha C-terminal domain (alpha-CTD).

The protein belongs to the RNA polymerase alpha chain family. In terms of assembly, homodimer. The RNAP catalytic core consists of 2 alpha, 1 beta, 1 beta' and 1 omega subunit. When a sigma factor is associated with the core the holoenzyme is formed, which can initiate transcription.

The catalysed reaction is RNA(n) + a ribonucleoside 5'-triphosphate = RNA(n+1) + diphosphate. In terms of biological role, DNA-dependent RNA polymerase catalyzes the transcription of DNA into RNA using the four ribonucleoside triphosphates as substrates. The polypeptide is DNA-directed RNA polymerase subunit alpha (Jannaschia sp. (strain CCS1)).